Reading from the N-terminus, the 1401-residue chain is MISVGEIMERANHSLVRMRREGEDLTLEEKAEICSELELQQKYVDIASNIIGDLSSLPIAGKIAGTIAAAAMTATHVASGRLDIEQTLLGCSDLPFDQIKEVLENRFNEIDRKLDSHSAALEEITKLVEKSISVVEKTRKQMNKRFDEVMKSIQDAKVSPIISKINNFARYFDTEKERIRGLKLNDYILKLEEPNGILLHFKESRTPTDDSLQAPLFSIIEEGYAVPKSIDDELAFKVLYALLYGTQTYVSVMFFLLEQYSFLANHYYEKGYLEKYDEYFNSLNNVFLDFKSSLVGTGTSNNEGLLDRVLQVLMTVKNSEFLGLEKNGVDEMLNEKINLFNKIKEEIEGKQKMTLSETPENFAQISFDKDITTPIGDWRDGREVRYAVQYASETLFSKISHWSDPVSVREKACPTLRMPVDQTRRNVLVFRKFDSSKPQLVGEITPYLSNFIDIDRDLYNAASNPDSAVGFKEFTKLNYDGANIRATFDHGRTVFHAAAKSGNDKIMFGLTFLAKSTELNQPDKKGYTPIHVAADSGNAGIVNLLIQRGVSINSKTYHFLQTPLHLAAQRGFVTTFQRLMESPEININERDKDGFTPLHYAIRGGERILEAFLNQISIDVNAKSNTGLTPFHLAIIKNDWPVASTLLGSKKVDINAVDENNITALHYAAILGYLETTKQLINLKEINANVVSSPGLLSALHYAILYKHDDVASFLMRSSNVNVNLKALGGITPLHLAVIQGRKQILSLMFDIGVNIEQKTDEKYTPLHLAAMSKYPELIQILLDQGSNFEAKTNSGATPLHLATFKGKSQAALILLNNEVNWRDTDENGQMPIHGAAMTGLLDVAQAIISIDATVVDIEDKNSDTPLNLAAQNSHIDVIKYFIDQGADINTRNKKGLAPLLAFSKKGNLDMVKYLFDKNANVYIADNDGMNFFYYAVQNGHLNIVKYAMSEKDKFEWSNTDNNRRDECPNEECAISHFAVCDAVQFDRIEIVKYFVGTLGNFAICGPLHQAARYGHLDIVKYLVEEEFLSVDGSKTDTPLCYASENGHFTVVQYLVSNGAKVNHDCGNGMTAIDKAITKNHLQVVQFLAANGVDFRRKNSRGTTPFLTAVAENALHIAEYLIREKRQDININEQNVDKDTALHLAVYYKNLQMIKLLIKYGIDVTIRNAYDKTALDIAIDAKFSNIVEYLKTKSGKFRREYKSSYGERSLLQTNQISNFIDRKNIEHDHPLFINADNESSELFSKTASNIDVIGTLLLIDVLIRYFSKQGYISKESDSASDGITQAAALSITEKFEDVLNSLHNESAKEQVDLAEVHGKVYAALKSGRNSQIHQILCSSLNSISTLKPEDMEKLESVIMNSHSSVSLPEVTDSANEAYGETLHLFGESCLHSDGILTKKLM.

Positions 1-20 (MISVGEIMERANHSLVRMRR) are cleaved as a signal peptide. The furin-like endopeptidase recognition region stretch occupies residues 17–20 (RMRR). The helix H8 is the probable transmembrane region of the tetrameric pore inserted in the target cell membrane stretch occupies residues 238 to 257 (VLYALLYGTQTYVSVMFFLL). Cysteine 413 and cysteine 1066 are disulfide-bonded. ANK repeat units lie at residues 458 to 489 (LYNAASNPDSAVGFKEFTKLNYDGANIRATFD), 490 to 521 (HGRTVFHAAAKSGNDKIMFGLTFLAKSTELNQ), 525 to 554 (KGYTPIHVAADSGNAGIVNLLIQRGVSINS), 559 to 589 (FLQTPLHLAAQRGFVTTFQRLMESPEININE), 593 to 622 (DGFTPLHYAIRGGERILEAFLNQISIDVNA), 626 to 656 (TGLTPFHLAIIKNDWPVASTLLGSKKVDINA), 660 to 690 (NNITALHYAAILGYLETTKQLINLKEINANV), 695 to 723 (GLLSALHYAILYKHDDVASFLMRSSNVNV), 729 to 758 (GGITPLHLAVIQGRKQILSLMFDIGVNIEQ), 762 to 791 (EKYTPLHLAAMSKYPELIQILLDQGSNFEA), 795 to 824 (SGATPLHLATFKGKSQAALILLNNEVNWRD), 828 to 857 (NGQMPIHGAAMTGLLDVAQAIISIDATVVD), 862 to 891 (NSDTPLNLAAQNSHIDVIKYFIDQGADINT), 895 to 924 (KGLAPLLAFSKKGNLDMVKYLFDKNANVYI), 928 to 957 (DGMNFFYYAVQNGHLNIVKYAMSEKDKFEW), 971 to 1003 (EECAISHFAVCDAVQFDRIEIVKYFVGTLGNFA), 1004 to 1033 (ICGPLHQAARYGHLDIVKYLVEEEFLSVDG), 1035 to 1064 (KTDTPLCYASENGHFTVVQYLVSNGAKVNH), 1068 to 1097 (NGMTAIDKAITKNHLQVVQFLAANGVDFRR), 1101 to 1131 (RGTTPFLTAVAENALHIAEYLIREKRQDINI), 1137 to 1166 (DKDTALHLAVYYKNLQMIKLLIKYGIDVTI), and 1170 to 1199 (YDKTALDIAIDAKFSNIVEYLKTKSGKFRR). Residues 1026–1032 (EEFLSVD) are 4C4.1 epitope. Residues 1196–1199 (KFRR) form a furin-like endopeptidase recognition region region. The propeptide occupies 1200 to 1401 (EYKSSYGERS…SDGILTKKLM (202 aa)).

Belongs to the cationic peptide 01 (latrotoxin) family. 03 (alpha-latrotoxin) subfamily. As to quaternary structure, homotetramer in membranes. Processed by furin-like proteases at both the N- and C-termini. Expressed in venom gland, cephalothorax, and abdomen tissues from both males and females.

It localises to the secreted. It is found in the target cell membrane. Presynaptic neurotoxin that causes massive release of neurotransmitters from vertebrate (but not invertebrate) nerve terminals and endocrine cells via a complex mechanism involving activation of receptor(s) and toxin insertion into the plasma membrane with subsequent pore formation. Binds to neurexin-1-alpha (NRXN1) in a calcium dependent manner, adhesion G protein-coupled receptor L1 (ADGRL1, also termed latrophilin-1 and calcium-independent receptor of latrotoxin (CIRL)), and receptor-type tyrosine-protein phosphatase S (PTPRS), also termed PTP sigma. NRXN1 and PTPRS are suggested to provide a platform for binding and subsequent pore formation events. In contrast, binding to ADGRL1 does not involve oligomerization and channel formation, but direct downstream stimulation of the synaptic fusion machinery. This Latrodectus tredecimguttatus (Mediterranean black widow spider) protein is Alpha-latrotoxin-Lt1a.